The sequence spans 397 residues: E3 ubiquitin-protein ligase RNF149 (397 aa).

The N-terminal stretch at 1–20 (MLRWLCLYSALCALTHGSSA) is a signal peptide. The segment covering 39 to 49 (TNSSVTGSTES) has biased composition (polar residues). Positions 39–60 (TNSSVTGSTESGRYGDSSPKES) are disordered. N-linked (GlcNAc...) asparagine glycosylation is found at asparagine 40 and asparagine 140. Residues 83-170 (YIVPGTSAAA…PKGMEIMEPL (88 aa)) enclose the PA domain. The helical transmembrane segment at 196 to 216 (VVFVAIAFITMMIISLAWLIF) threads the bilayer. Asparagine 231 is a glycosylation site (N-linked (GlcNAc...) asparagine). Residues 264-305 (CAVCIENYKTKDLVRILPCKHIFHRLCIDPWLIEHRTCPMCK) form an RING-type; atypical zinc finger. Residues 341 to 397 (SITQEESRSEGNNLPSSSTGSSLQQSNSVKDDAGETTALLDDPGNDNAAATHTQDSH) form a disordered region. Over residues 351–368 (GNNLPSSSTGSSLQQSNS) the composition is skewed to low complexity. Positions 388 to 397 (AAATHTQDSH) are enriched in polar residues.

The protein localises to the membrane. It carries out the reaction S-ubiquitinyl-[E2 ubiquitin-conjugating enzyme]-L-cysteine + [acceptor protein]-L-lysine = [E2 ubiquitin-conjugating enzyme]-L-cysteine + N(6)-ubiquitinyl-[acceptor protein]-L-lysine.. Its pathway is protein modification; protein ubiquitination. In terms of biological role, E3 ubiquitin-protein ligase. Ubiquitinates BRAF, inducing its proteasomal degradation. This Xenopus laevis (African clawed frog) protein is E3 ubiquitin-protein ligase RNF149 (rnf149).